A 420-amino-acid chain; its full sequence is Phosphoribosylamine--glycine ligase (420 aa).

Residues 108-314 (KQIMVKYGIP…FAQNIDDILH (207 aa)) enclose the ATP-grasp domain. 134-195 (IEEQGAPIVV…EEFLAGEEFS (62 aa)) serves as a coordination point for ATP. Mg(2+)-binding residues include Glu284 and Asn286.

It belongs to the GARS family. Mg(2+) is required as a cofactor. Requires Mn(2+) as cofactor.

The catalysed reaction is 5-phospho-beta-D-ribosylamine + glycine + ATP = N(1)-(5-phospho-beta-D-ribosyl)glycinamide + ADP + phosphate + H(+). It functions in the pathway purine metabolism; IMP biosynthesis via de novo pathway; N(1)-(5-phospho-D-ribosyl)glycinamide from 5-phospho-alpha-D-ribose 1-diphosphate: step 2/2. This Streptococcus suis protein is Phosphoribosylamine--glycine ligase.